A 279-amino-acid chain; its full sequence is Universal stress protein MT2087 (279 aa).

Belongs to the universal stress protein A family.

This chain is Universal stress protein MT2087, found in Mycobacterium tuberculosis (strain CDC 1551 / Oshkosh).